We begin with the raw amino-acid sequence, 357 residues long: Putative ankyrin repeat protein L42 (357 aa).

ANK repeat units lie at residues 34 to 63 (SCKQ…NLKF), 86 to 115 (EQNE…DFRM), 116 to 145 (NDDE…NIRA), 147 to 175 (NNRP…SFVS), 176 to 205 (KQNE…DINV), 206 to 235 (GKIP…SINK), 237 to 265 (SVDS…EVNI), 267 to 294 (YYAF…ITKD), and 301 to 331 (NTRY…DKDK).

In Acanthamoeba polyphaga (Amoeba), this protein is Putative ankyrin repeat protein L42.